Reading from the N-terminus, the 318-residue chain is Glycine--tRNA ligase alpha subunit (318 aa).

This sequence belongs to the class-II aminoacyl-tRNA synthetase family. Tetramer of two alpha and two beta subunits.

The protein localises to the cytoplasm. The catalysed reaction is tRNA(Gly) + glycine + ATP = glycyl-tRNA(Gly) + AMP + diphosphate. This is Glycine--tRNA ligase alpha subunit from Methylibium petroleiphilum (strain ATCC BAA-1232 / LMG 22953 / PM1).